A 316-amino-acid polypeptide reads, in one-letter code: Homoserine kinase (316 aa).

96-106 (PHGRGLGSSGA) is a binding site for ATP.

It belongs to the GHMP kinase family. Homoserine kinase subfamily.

Its subcellular location is the cytoplasm. It catalyses the reaction L-homoserine + ATP = O-phospho-L-homoserine + ADP + H(+). It functions in the pathway amino-acid biosynthesis; L-threonine biosynthesis; L-threonine from L-aspartate: step 4/5. Catalyzes the ATP-dependent phosphorylation of L-homoserine to L-homoserine phosphate. This Clavibacter michiganensis subsp. michiganensis (strain NCPPB 382) protein is Homoserine kinase.